The sequence spans 213 residues: Thymidylate kinase (213 aa).

10–17 (GLEGAGKT) contributes to the ATP binding site.

Belongs to the thymidylate kinase family.

The enzyme catalyses dTMP + ATP = dTDP + ADP. Its function is as follows. Phosphorylation of dTMP to form dTDP in both de novo and salvage pathways of dTTP synthesis. In Salmonella choleraesuis (strain SC-B67), this protein is Thymidylate kinase.